Consider the following 106-residue polypeptide: Small ribosomal subunit protein uS10 (106 aa).

Belongs to the universal ribosomal protein uS10 family. In terms of assembly, part of the 30S ribosomal subunit.

Its function is as follows. Involved in the binding of tRNA to the ribosomes. This chain is Small ribosomal subunit protein uS10, found in Pyrobaculum islandicum (strain DSM 4184 / JCM 9189 / GEO3).